We begin with the raw amino-acid sequence, 438 residues long: Coenzyme A disulfide reductase (438 aa).

8–33 contacts FAD; it reads GAVAGGATCASQIRRLDKESDIIIFE. Substrate is bound by residues T15, Q19, R22, S39, and N42. Catalysis depends on C43, which acts as the Nucleophile. C43 functions as the Redox-active in the catalytic mechanism. Residue K71 participates in substrate binding. 151–166 is an NADP(+) binding site; it reads VLVVGAGYVSLEVLEN. 267-277 provides a ligand contact to FAD; it reads TNVPNIYAIGD. Residue H299 participates in substrate binding. FAD is bound at residue Y419. K427 is a binding site for substrate.

Belongs to the class-III pyridine nucleotide-disulfide oxidoreductase family. In terms of assembly, homodimer. Requires FAD as cofactor.

It carries out the reaction NADP(+) + 2 CoA = CoA-disulfide + NADPH + H(+). In terms of biological role, catalyzes specifically the NADPH-dependent reduction of coenzyme A disulfide. The protein is Coenzyme A disulfide reductase of Staphylococcus aureus (strain bovine RF122 / ET3-1).